The following is an 883-amino-acid chain: Probable pre-mRNA-splicing factor ATP-dependent RNA helicase DEAH8 (883 aa).

A Helicase ATP-binding domain is found at Leu-232–Pro-395. Gly-245–Thr-252 contacts ATP. The DEAH box signature appears at Asp-342–His-345. The Helicase C-terminal domain occupies Thr-416 to Gly-589. The interval Glu-845 to Arg-883 is disordered.

The protein belongs to the DEAD box helicase family. DEAH subfamily. PRP2 sub-subfamily. As to expression, predominantly expressed in flowers.

The enzyme catalyses ATP + H2O = ADP + phosphate + H(+). May be involved in pre-mRNA splicing. This is Probable pre-mRNA-splicing factor ATP-dependent RNA helicase DEAH8 from Arabidopsis thaliana (Mouse-ear cress).